We begin with the raw amino-acid sequence, 758 residues long: 5-methyltetrahydropteroyltriglutamate--homocysteine methyltransferase (758 aa).

5-methyltetrahydropteroyltri-L-glutamate contacts are provided by residues 17–20 (RELK) and Lys117. L-homocysteine-binding positions include 434-436 (IGS) and Glu487. L-methionine contacts are provided by residues 434–436 (IGS) and Glu487. Residues 518–519 (RC) and Trp564 contribute to the 5-methyltetrahydropteroyltri-L-glutamate site. Asp602 lines the L-homocysteine pocket. Asp602 lines the L-methionine pocket. 5-methyltetrahydropteroyltri-L-glutamate is bound at residue Glu608. Zn(2+) contacts are provided by His644, Cys646, and Glu668. His697 serves as the catalytic Proton donor. Cys729 contacts Zn(2+).

This sequence belongs to the vitamin-B12 independent methionine synthase family. Zn(2+) is required as a cofactor.

It carries out the reaction 5-methyltetrahydropteroyltri-L-glutamate + L-homocysteine = tetrahydropteroyltri-L-glutamate + L-methionine. Its pathway is amino-acid biosynthesis; L-methionine biosynthesis via de novo pathway; L-methionine from L-homocysteine (MetE route): step 1/1. In terms of biological role, catalyzes the transfer of a methyl group from 5-methyltetrahydrofolate to homocysteine resulting in methionine formation. The protein is 5-methyltetrahydropteroyltriglutamate--homocysteine methyltransferase of Yersinia pseudotuberculosis serotype I (strain IP32953).